The sequence spans 90 residues: Conotoxin Im6.2 (90 aa).

The first 18 residues, 1–18 (MKLTILLLVAALLVLTQA), serve as a signal peptide directing secretion. Residues 19 to 29 (RTERRRVKSRK) constitute a propeptide that is removed on maturation. 3 disulfide bridges follow: cysteine 61/cysteine 75, cysteine 68/cysteine 79, and cysteine 74/cysteine 84. Glutamate 89 carries the glutamic acid 1-amide modification.

It belongs to the conotoxin O2 superfamily. In terms of tissue distribution, expressed by the venom duct.

It is found in the secreted. In terms of biological role, probable neurotoxin. In Conus imperialis (Imperial cone), this protein is Conotoxin Im6.2.